Reading from the N-terminus, the 327-residue chain is D-alanine--D-alanine ligase (327 aa).

One can recognise an ATP-grasp domain in the interval 113–312 (KRLWMTHGLA…YEDFVLQVLA (200 aa)). 139–194 (VADLGLPLIVKPAREGSSIGLTKVTAADQMRAAFDKAAALDNDVIAETFVDGAELT) serves as a coordination point for ATP. Mg(2+) is bound by residues Asp-266, Glu-279, and Asn-281.

It belongs to the D-alanine--D-alanine ligase family. The cofactor is Mg(2+). It depends on Mn(2+) as a cofactor.

It is found in the cytoplasm. The enzyme catalyses 2 D-alanine + ATP = D-alanyl-D-alanine + ADP + phosphate + H(+). It participates in cell wall biogenesis; peptidoglycan biosynthesis. Its function is as follows. Cell wall formation. This chain is D-alanine--D-alanine ligase, found in Cupriavidus taiwanensis (strain DSM 17343 / BCRC 17206 / CCUG 44338 / CIP 107171 / LMG 19424 / R1) (Ralstonia taiwanensis (strain LMG 19424)).